A 629-amino-acid chain; its full sequence is tRNA uridine 5-carboxymethylaminomethyl modification enzyme MnmG (629 aa).

FAD is bound at residue 13-18 (GGGHAG). Residue 273-287 (GPRYCPSIEDKVNRF) participates in NAD(+) binding.

Belongs to the MnmG family. In terms of assembly, homodimer. Heterotetramer of two MnmE and two MnmG subunits. Requires FAD as cofactor.

It is found in the cytoplasm. Its function is as follows. NAD-binding protein involved in the addition of a carboxymethylaminomethyl (cmnm) group at the wobble position (U34) of certain tRNAs, forming tRNA-cmnm(5)s(2)U34. The chain is tRNA uridine 5-carboxymethylaminomethyl modification enzyme MnmG from Shewanella pealeana (strain ATCC 700345 / ANG-SQ1).